A 329-amino-acid chain; its full sequence is Ribonucleoside-diphosphate reductase small chain (329 aa).

Fe cation-binding residues include Asp75, Glu106, and His109. Residue Tyr113 is part of the active site. The Fe cation site is built by Glu168, Glu202, and His205.

The protein belongs to the ribonucleoside diphosphate reductase small chain family. In terms of assembly, heterodimer of a large and a small chain. Requires Fe cation as cofactor.

The protein localises to the cytoplasm. It carries out the reaction a 2'-deoxyribonucleoside 5'-diphosphate + [thioredoxin]-disulfide + H2O = a ribonucleoside 5'-diphosphate + [thioredoxin]-dithiol. Its function is as follows. Provides the precursors necessary for DNA synthesis. Catalyzes the biosynthesis of deoxyribonucleotides from the corresponding ribonucleotides. The chain is Ribonucleoside-diphosphate reductase small chain from Nicotiana tabacum (Common tobacco).